We begin with the raw amino-acid sequence, 346 residues long: Annexin A1 (346 aa).

The residue at position 2 (Ala-2) is an N-acetylalanine. Ser-5 is subject to Phosphoserine; by TRPM7. An Isoglutamyl lysine isopeptide (Gln-Lys) (interchain with K-?) cross-link involves residue Gln-19. Tyr-21 is subject to Phosphotyrosine; by EGFR. Ser-27 is subject to Phosphoserine; by PKC. A phosphoserine mark is found at Ser-34 and Ser-37. At Thr-41 the chain carries Phosphothreonine. Annexin repeat units lie at residues 42-113 (FNPS…ALLK), 114-185 (TPAQ…SLAK), 197-269 (DLAD…AIVK), and 273-344 (SKPA…ALCG). N6-acetyllysine is present on Lys-58. Ca(2+) contacts are provided by Gly-59, Val-60, Glu-62, Lys-97, Leu-100, Glu-105, Met-127, Gly-129, Gly-131, Thr-132, and Glu-134. At Thr-136 the chain carries Phosphothreonine. Ca(2+)-binding residues include Asp-171, Gly-210, and Arg-213. A Glycyl lysine isopeptide (Lys-Gly) (interchain with G-Cter in SUMO1); alternate cross-link involves residue Lys-214. A Glycyl lysine isopeptide (Lys-Gly) (interchain with G-Cter in SUMO2); alternate cross-link involves residue Lys-214. Residue Gly-215 coordinates Ca(2+). Lys-239 is subject to N6-acetyllysine. Residues Asp-253, Glu-255, and Leu-256 each contribute to the Ca(2+) site. Lys-257 participates in a covalent cross-link: Glycyl lysine isopeptide (Lys-Gly) (interchain with G-Cter in SUMO1). Glu-261, Met-286, Gly-288, and Gly-290 together coordinate Ca(2+). Lys-312 is subject to N6-acetyllysine. Cys-324 and Cys-343 are disulfide-bonded. 3 residues coordinate Ca(2+): Leu-328, Glu-330, and Thr-331. Lys-332 is covalently cross-linked (Glycyl lysine isopeptide (Lys-Gly) (interchain with G-Cter in SUMO1)). Glu-336 contacts Ca(2+).

This sequence belongs to the annexin family. In terms of assembly, homodimer; non-covalently linked. Homodimer; linked by transglutamylation. Homodimers linked by transglutamylation are observed in placenta, but not in other tissues. Interacts with S100A11. Heterotetramer, formed by two molecules each of S100A11 and ANXA1. Interacts with DYSF. Interacts with EGFR. In terms of processing, phosphorylated by protein kinase C, EGFR and TRPM7. Phosphorylated in response to EGF treatment. Sumoylated. Post-translationally, proteolytically cleaved by cathepsin CTSG to release the active N-terminal peptide Ac2-26. Detected in resting neutrophils. Detected in peripheral blood T-cells. Detected in extracellular vesicles in blood serum from patients with inflammatory bowel disease, but not in serum from healthy donors. Detected in placenta (at protein level). Detected in liver.

It localises to the nucleus. The protein localises to the cytoplasm. It is found in the cell projection. Its subcellular location is the cilium. The protein resides in the cell membrane. It localises to the membrane. The protein localises to the endosome membrane. It is found in the basolateral cell membrane. Its subcellular location is the apical cell membrane. The protein resides in the lateral cell membrane. It localises to the secreted. The protein localises to the extracellular space. It is found in the extracellular exosome. Its subcellular location is the cytoplasmic vesicle. The protein resides in the secretory vesicle lumen. It localises to the phagocytic cup. The protein localises to the early endosome. It is found in the cytoplasmic vesicle membrane. Its function is as follows. Plays important roles in the innate immune response as effector of glucocorticoid-mediated responses and regulator of the inflammatory process. Has anti-inflammatory activity. Plays a role in glucocorticoid-mediated down-regulation of the early phase of the inflammatory response. Contributes to the adaptive immune response by enhancing signaling cascades that are triggered by T-cell activation, regulates differentiation and proliferation of activated T-cells. Promotes the differentiation of T-cells into Th1 cells and negatively regulates differentiation into Th2 cells. Has no effect on unstimulated T cells. Negatively regulates hormone exocytosis via activation of the formyl peptide receptors and reorganization of the actin cytoskeleton. Has high affinity for Ca(2+) and can bind up to eight Ca(2+) ions. Displays Ca(2+)-dependent binding to phospholipid membranes. Plays a role in the formation of phagocytic cups and phagosomes. Plays a role in phagocytosis by mediating the Ca(2+)-dependent interaction between phagosomes and the actin cytoskeleton. Functions at least in part by activating the formyl peptide receptors and downstream signaling cascades. Promotes chemotaxis of granulocytes and monocytes via activation of the formyl peptide receptors. Promotes rearrangement of the actin cytoskeleton, cell polarization and cell migration. Promotes resolution of inflammation and wound healing. Acts via neutrophil N-formyl peptide receptors to enhance the release of CXCL2. The protein is Annexin A1 (ANXA1) of Homo sapiens (Human).